The primary structure comprises 236 residues: Uridylate kinase (236 aa).

An ATP-binding site is contributed by 10-11 (GS). Gly-44 contributes to the UMP binding site. 2 residues coordinate ATP: Gly-45 and Arg-49. UMP contacts are provided by residues Asp-66 and 114–120 (ITPGQTT). ATP contacts are provided by Thr-140, Tyr-146, and Asp-149.

The protein belongs to the UMP kinase family. In terms of assembly, homohexamer.

It localises to the cytoplasm. It carries out the reaction UMP + ATP = UDP + ADP. The protein operates within pyrimidine metabolism; CTP biosynthesis via de novo pathway; UDP from UMP (UMPK route): step 1/1. Its activity is regulated as follows. Inhibited by UTP. Catalyzes the reversible phosphorylation of UMP to UDP. The protein is Uridylate kinase of Methanospirillum hungatei JF-1 (strain ATCC 27890 / DSM 864 / NBRC 100397 / JF-1).